The chain runs to 213 residues: Probable GH family 25 lysozyme 4 (213 aa).

The first 19 residues, 1–19, serve as a signal peptide directing secretion; the sequence is MRLFLLLITFIALFGAINA. Positions 21 to 213 constitute a Ch-type lysozyme domain; the sequence is SGVDISQGSS…VGYDFNWYPN (193 aa). Active-site residues include D24, D112, and E114.

This sequence belongs to the glycosyl hydrolase 25 family.

The protein localises to the secreted. The catalysed reaction is Hydrolysis of (1-&gt;4)-beta-linkages between N-acetylmuramic acid and N-acetyl-D-glucosamine residues in a peptidoglycan and between N-acetyl-D-glucosamine residues in chitodextrins.. This Dictyostelium discoideum (Social amoeba) protein is Probable GH family 25 lysozyme 4.